The sequence spans 235 residues: MRLAVNIDHIATLRNARNEHNPDPVEAALLAEKSGAVGIVCHLREDRRHIRDHDLAALRKAVTTKLDLEMAMTDEMGAIAVATMPELITLVPEKREELTTEGGFAIERHFNRLVDFLEPIKGAGIEISLFIEAEQRAIDLAEKAGADLVELHTGAYALKTGEEQAIELKKIRQAAVYAKSLGLRVVAGHGLNYENIAPFRDIEEIEEVSIGHALIARAAFVGIPAAVREMLDIIN.

N6 contacts 3-amino-2-oxopropyl phosphate. Residue 8 to 9 (DH) coordinates 1-deoxy-D-xylulose 5-phosphate. R17 is a 3-amino-2-oxopropyl phosphate binding site. H42 (proton acceptor) is an active-site residue. Residues R44 and H49 each contribute to the 1-deoxy-D-xylulose 5-phosphate site. The active-site Proton acceptor is E69. T99 is a 1-deoxy-D-xylulose 5-phosphate binding site. The active-site Proton donor is H189. 3-amino-2-oxopropyl phosphate-binding positions include G190 and 211–212 (GH).

It belongs to the PNP synthase family. As to quaternary structure, homooctamer; tetramer of dimers.

It is found in the cytoplasm. It catalyses the reaction 3-amino-2-oxopropyl phosphate + 1-deoxy-D-xylulose 5-phosphate = pyridoxine 5'-phosphate + phosphate + 2 H2O + H(+). Its pathway is cofactor biosynthesis; pyridoxine 5'-phosphate biosynthesis; pyridoxine 5'-phosphate from D-erythrose 4-phosphate: step 5/5. Functionally, catalyzes the complicated ring closure reaction between the two acyclic compounds 1-deoxy-D-xylulose-5-phosphate (DXP) and 3-amino-2-oxopropyl phosphate (1-amino-acetone-3-phosphate or AAP) to form pyridoxine 5'-phosphate (PNP) and inorganic phosphate. In Chlorobium phaeovibrioides (strain DSM 265 / 1930) (Prosthecochloris vibrioformis (strain DSM 265)), this protein is Pyridoxine 5'-phosphate synthase.